Reading from the N-terminus, the 413-residue chain is Arginine biosynthesis bifunctional protein ArgJ (413 aa).

Residues Thr160, Lys186, Thr197, Glu277, Asn408, and Thr413 each coordinate substrate. The Nucleophile role is filled by Thr197.

Belongs to the ArgJ family. As to quaternary structure, heterotetramer of two alpha and two beta chains.

It is found in the cytoplasm. It carries out the reaction N(2)-acetyl-L-ornithine + L-glutamate = N-acetyl-L-glutamate + L-ornithine. It catalyses the reaction L-glutamate + acetyl-CoA = N-acetyl-L-glutamate + CoA + H(+). It functions in the pathway amino-acid biosynthesis; L-arginine biosynthesis; L-ornithine and N-acetyl-L-glutamate from L-glutamate and N(2)-acetyl-L-ornithine (cyclic): step 1/1. It participates in amino-acid biosynthesis; L-arginine biosynthesis; N(2)-acetyl-L-ornithine from L-glutamate: step 1/4. Its function is as follows. Catalyzes two activities which are involved in the cyclic version of arginine biosynthesis: the synthesis of N-acetylglutamate from glutamate and acetyl-CoA as the acetyl donor, and of ornithine by transacetylation between N(2)-acetylornithine and glutamate. The protein is Arginine biosynthesis bifunctional protein ArgJ of Prochlorococcus marinus (strain SARG / CCMP1375 / SS120).